We begin with the raw amino-acid sequence, 362 residues long: G-protein coupled receptor 6 (362 aa).

At 1–74 the chain is on the extracellular side; sequence MNASAASLND…PGLLLPAVNP (74 aa). N-linked (GlcNAc...) asparagine glycans are attached at residues Asn-2, Asn-9, and Asn-51. Residues 75-94 traverse the membrane as a helical segment; it reads WDVLLCVSGTVIAGENALVV. At 95-106 the chain is on the cytoplasmic side; the sequence is ALIASTPALRTP. Residues 107 to 130 traverse the membrane as a helical segment; it reads MFVLVGSLATADLLAGCGLILHFV. At 131–142 the chain is on the extracellular side; the sequence is FQYLVPSETVSL. The helical transmembrane segment at 143 to 164 threads the bilayer; it reads LTVGFLVASFAASVSSLLAITV. Over 165–185 the chain is Cytoplasmic; it reads DRYLSLYNALTYYSRRTLLGV. Residues 186 to 205 form a helical membrane-spanning segment; it reads HLLLAATWTVSLGLGLLPVL. Residues 206 to 230 lie on the Extracellular side of the membrane; sequence GWNCLAERAACSVVRPLARSHVALL. A helical transmembrane segment spans residues 231–249; the sequence is SAAFFMVFGIMLHLYVRIC. Residues 250 to 277 are Cytoplasmic-facing; the sequence is QVVWRHAHQIALQQHCLAPPHLAATRKG. A helical transmembrane segment spans residues 278–304; sequence VGTLAVVLGTFGASWLPFAIYCVVGSH. At 305 to 309 the chain is on the extracellular side; sequence EDPAV. Residues 310 to 331 form a helical membrane-spanning segment; the sequence is YTYATLLPATYNSMINPIIYAF. The Cytoplasmic portion of the chain corresponds to 332 to 362; it reads RNQEIQRALWLLLCGCFQSKVPFRSRSPSEV. Residue Cys-345 is the site of S-palmitoyl cysteine attachment. Residues Ser-356, Ser-358, and Ser-360 each carry the phosphoserine modification.

The protein belongs to the G-protein coupled receptor 1 family.

Its subcellular location is the cell membrane. In terms of biological role, orphan receptor with constitutive G(s) signaling activity that activate cyclic AMP. Promotes neurite outgrowth and blocks myelin inhibition in neurons. The sequence is that of G-protein coupled receptor 6 (GPR6) from Homo sapiens (Human).